We begin with the raw amino-acid sequence, 143 residues long: Large ribosomal subunit protein uL11 (143 aa).

Belongs to the universal ribosomal protein uL11 family. In terms of assembly, part of the ribosomal stalk of the 50S ribosomal subunit. Interacts with L10 and the large rRNA to form the base of the stalk. L10 forms an elongated spine to which L12 dimers bind in a sequential fashion forming a multimeric L10(L12)X complex. One or more lysine residues are methylated.

Its function is as follows. Forms part of the ribosomal stalk which helps the ribosome interact with GTP-bound translation factors. This is Large ribosomal subunit protein uL11 from Methylococcus capsulatus (strain ATCC 33009 / NCIMB 11132 / Bath).